The sequence spans 219 residues: Interleukin-12 subunit alpha (219 aa).

Residues 1–22 (MCPARSLLLVATLVLLDYLSLA) form the signal peptide. N-linked (GlcNAc...) asparagine glycans are attached at residues Asn-24, Asn-93, and Asn-107. 3 cysteine pairs are disulfide-bonded: Cys-37–Cys-110, Cys-64–Cys-196, and Cys-85–Cys-123.

This sequence belongs to the IL-6 superfamily. In terms of assembly, heterodimer with IL12B; disulfide-linked. This heterodimer is known as interleukin IL-12. Heterodimer with EBI3/IL27B; not disulfide-linked. This heterodimer is known as interleukin IL-35. Interacts with NBR1; this interaction promotes IL-12 secretion.

It localises to the secreted. Its function is as follows. Heterodimerizes with IL12B to form the IL-12 cytokine or with EBI3/IL27B to form the IL-35 cytokine. IL-12 is primarily produced by professional antigen-presenting cells (APCs) such as B-cells and dendritic cells (DCs) as well as macrophages and granulocytes and regulates T-cell and natural killer-cell responses, induces the production of interferon-gamma (IFN-gamma), favors the differentiation of T-helper 1 (Th1) cells and is an important link between innate resistance and adaptive immunity. Mechanistically, exerts its biological effects through a receptor composed of IL12R1 and IL12R2 subunits. Binding to the receptor results in the rapid tyrosine phosphorylation of a number of cellular substrates including the JAK family kinases TYK2 and JAK2. In turn, recruited STAT4 gets phosphorylated and translocates to the nucleus where it regulates cytokine/growth factor responsive genes. As part of IL-35, plays essential roles in maintaining the immune homeostasis of the liver microenvironment and also functions as an immune-suppressive cytokine. Mediates biological events through unconventional receptors composed of IL12RB2 and gp130/IL6ST heterodimers or homodimers. Signaling requires the transcription factors STAT1 and STAT4, which form a unique heterodimer that binds to distinct DNA sites. The protein is Interleukin-12 subunit alpha (IL12A) of Macaca mulatta (Rhesus macaque).